Here is a 427-residue protein sequence, read N- to C-terminus: Glutamate-1-semialdehyde 2,1-aminomutase (427 aa).

Residue lysine 267 is modified to N6-(pyridoxal phosphate)lysine.

This sequence belongs to the class-III pyridoxal-phosphate-dependent aminotransferase family. HemL subfamily. Homodimer. Pyridoxal 5'-phosphate is required as a cofactor.

Its subcellular location is the cytoplasm. It carries out the reaction (S)-4-amino-5-oxopentanoate = 5-aminolevulinate. The protein operates within porphyrin-containing compound metabolism; protoporphyrin-IX biosynthesis; 5-aminolevulinate from L-glutamyl-tRNA(Glu): step 2/2. The protein is Glutamate-1-semialdehyde 2,1-aminomutase of Geobacter metallireducens (strain ATCC 53774 / DSM 7210 / GS-15).